Consider the following 127-residue polypeptide: Probable 4-amino-4-deoxy-L-arabinose-phosphoundecaprenol flippase subunit ArnF (127 aa).

Over 1-2 (MG) the chain is Cytoplasmic. Residues 3-23 (LLFALGSVVLVSAAQLLLKWA) form a helical membrane-spanning segment. At 24-47 (MIQLPDISQLPQFLSSLSQFPLPT) the chain is on the periplasmic side. Residues 48 to 68 (AALFLGLLAYALSMLCWLLAL) form a helical membrane-spanning segment. The Cytoplasmic segment spans residues 69 to 76 (KRLPLSRA). A helical membrane pass occupies residues 77–97 (YPLLSLSYLLVWLAALWLPGL). Residues 98 to 102 (NEVFR) are Periplasmic-facing. Residues 103 to 123 (WGKLAGAGLIVSGLLLICWPA) form a helical membrane-spanning segment. Residues 124-127 (AKTR) lie on the Cytoplasmic side of the membrane.

The protein belongs to the ArnF family. In terms of assembly, heterodimer of ArnE and ArnF.

The protein localises to the cell inner membrane. It participates in bacterial outer membrane biogenesis; lipopolysaccharide biosynthesis. Functionally, translocates 4-amino-4-deoxy-L-arabinose-phosphoundecaprenol (alpha-L-Ara4N-phosphoundecaprenol) from the cytoplasmic to the periplasmic side of the inner membrane. The polypeptide is Probable 4-amino-4-deoxy-L-arabinose-phosphoundecaprenol flippase subunit ArnF (Erwinia tasmaniensis (strain DSM 17950 / CFBP 7177 / CIP 109463 / NCPPB 4357 / Et1/99)).